We begin with the raw amino-acid sequence, 121 residues long: Small ribosomal subunit protein uS13 (121 aa).

The segment at 99 to 121 (RGQRTRTNSRTRKGPRRKIMKKK) is disordered. A compositionally biased stretch (basic residues) spans 101 to 121 (QRTRTNSRTRKGPRRKIMKKK).

The protein belongs to the universal ribosomal protein uS13 family. In terms of assembly, part of the 30S ribosomal subunit. Forms a loose heterodimer with protein S19. Forms two bridges to the 50S subunit in the 70S ribosome.

In terms of biological role, located at the top of the head of the 30S subunit, it contacts several helices of the 16S rRNA. In the 70S ribosome it contacts the 23S rRNA (bridge B1a) and protein L5 of the 50S subunit (bridge B1b), connecting the 2 subunits; these bridges are implicated in subunit movement. Contacts the tRNAs in the A and P-sites. The chain is Small ribosomal subunit protein uS13 from Thermodesulfovibrio yellowstonii (strain ATCC 51303 / DSM 11347 / YP87).